The primary structure comprises 830 residues: Heavy metal tolerance protein (830 aa).

The first 27 residues, 1-27, serve as a signal peptide directing secretion; sequence MVLRYNSPRLNILELVLLYVGFFSIGS. The next 3 helical transmembrane spans lie at 51–71, 88–108, and 126–146; these read PIGI…VDIS, TTVV…ISCA, and LSVL…IVYS. N-linked (GlcNAc...) asparagine glycosylation is present at Asn-150. The next 3 membrane-spanning stretches (helical) occupy residues 156-176, 263-283, and 304-324; these read IVLA…AIYL, FQIF…ILAP, and DVIL…IGSL. One can recognise an ABC transmembrane type-1 domain in the interval 265–550; that stretch reads IFICIVLLFL…FGTLYRSLQN (286 aa). Residue Asn-350 is glycosylated (N-linked (GlcNAc...) asparagine). A run of 2 helical transmembrane segments spans residues 381–401 and 403–423; these read VVFQ…YFFI and FDIY…YVTV. Residues 429–433, 492–495, and Gly-542 each bind glutathione; these read RTEAR and NIVQ. The chain crosses the membrane as a helical span at residues 490–511; that stretch reads FLNIVQGGIFTFSLAIACLLSA. An ABC transporter domain is found at 584 to 818; the sequence is VIFSHVSFAY…DGGAYKKMWF (235 aa). Residues Tyr-593 and 617–628 each bind ATP; that span reads GESGGGKSTIMR.

This sequence belongs to the ABC transporter superfamily. ABCB family. Heavy Metal importer (TC 3.A.1.210) subfamily.

The protein localises to the vacuole membrane. Functionally, involved in metal tolerance. Probably involved in the transport of metal-bound phytochelatins. Compartmentalizes cadmium within vacuoles, thereby protecting cells from cadmium toxicity. In Schizosaccharomyces pombe (strain 972 / ATCC 24843) (Fission yeast), this protein is Heavy metal tolerance protein (hmt1).